Here is a 246-residue protein sequence, read N- to C-terminus: Trypsin-5 (246 aa).

A signal peptide spans 1–15; it reads MNSLLFLALVGAAVA. Positions 16 to 23 are cleaved as a propeptide — activation peptide; sequence FPVDDDDK. A Peptidase S1 domain is found at 24-244; it reads IVGGYTCREN…YVDWIQDTIA (221 aa). Cysteine 48 and cysteine 64 are oxidised to a cystine. Residues histidine 63 and aspartate 107 each act as charge relay system in the active site. Disulfide bonds link cysteine 139–cysteine 206, cysteine 171–cysteine 185, and cysteine 196–cysteine 220. The active-site Charge relay system is serine 200.

Belongs to the peptidase S1 family. In terms of processing, proteolytically cleaved and activated by an autocatalytic mechanism. Cleavage by CTRC inhibits autoactivation. Expressed in the heart, lung, brain, kidney, liver, epididymis, ovary and uterus. Expression in the testis is limited to round and elongating spermatids.

Its subcellular location is the cytoplasmic vesicle. It is found in the secretory vesicle. The protein localises to the acrosome. The catalysed reaction is Preferential cleavage: Arg-|-Xaa, Lys-|-Xaa.. Activated by autocatalytic cleavage. Cleavage by CTRC inhibits autoactivation. Serine protease capable of autoactivation. The chain is Trypsin-5 from Mus musculus (Mouse).